The chain runs to 195 residues: HTH-type transcriptional regulator BetI (195 aa).

The region spanning 8–68 (SIRRRQLIDA…ATMRDITSQL (61 aa)) is the HTH tetR-type domain. The H-T-H motif DNA-binding region spans 31–50 (TIAQIARRAGVSTGIISHYF).

It participates in amine and polyamine biosynthesis; betaine biosynthesis via choline pathway [regulation]. Its function is as follows. Repressor involved in the biosynthesis of the osmoprotectant glycine betaine. It represses transcription of the choline transporter BetT and the genes of BetAB involved in the synthesis of glycine betaine. The polypeptide is HTH-type transcriptional regulator BetI (Escherichia coli O17:K52:H18 (strain UMN026 / ExPEC)).